A 378-amino-acid chain; its full sequence is UPF0754 membrane protein SH1116 (378 aa).

2 helical membrane-spanning segments follow: residues Phe4–Ile24 and Ser358–Val378.

This sequence belongs to the UPF0754 family.

It localises to the cell membrane. The polypeptide is UPF0754 membrane protein SH1116 (Staphylococcus haemolyticus (strain JCSC1435)).